The following is a 517-amino-acid chain: Crotonobetaine/carnitine--CoA ligase (517 aa).

It belongs to the ATP-dependent AMP-binding enzyme family.

The catalysed reaction is 4-(trimethylamino)butanoate + ATP + CoA = 4-(trimethylamino)butanoyl-CoA + AMP + diphosphate. It carries out the reaction crotonobetaine + ATP + CoA = crotonobetainyl-CoA + AMP + diphosphate. It catalyses the reaction (R)-carnitine + ATP + CoA = (R)-carnitinyl-CoA + AMP + diphosphate. It functions in the pathway amine and polyamine metabolism; carnitine metabolism. Functionally, catalyzes the transfer of CoA to carnitine, generating the initial carnitinyl-CoA needed for the CaiB reaction cycle. Also has activity toward crotonobetaine and gamma-butyrobetaine. The polypeptide is Crotonobetaine/carnitine--CoA ligase (Escherichia fergusonii (strain ATCC 35469 / DSM 13698 / CCUG 18766 / IAM 14443 / JCM 21226 / LMG 7866 / NBRC 102419 / NCTC 12128 / CDC 0568-73)).